The primary structure comprises 310 residues: Upstream stimulatory factor 1 (310 aa).

A compositionally biased stretch (polar residues) spans 1–17 (MKGQQKTAETEEGTVQI). 2 disordered regions span residues 1-26 (MKGQ…ATGE) and 171-209 (QGGS…EVER). The span at 190–209 (EAPRTTRDEKRRAQHNEVER) shows a compositional bias: basic and acidic residues. Positions 199 to 254 (KRRAQHNEVERRRRDKINNWIVQLSKIIPDCSMESTKSGQSKGGILSKACDYIQEL) constitute a bHLH domain. Residues 271–292 (LQLDNDVLRQQVEDLKNKNLLL) are leucine-zipper. A Glycyl lysine isopeptide (Lys-Gly) (interchain with G-Cter in SUMO2) cross-link involves residue K306.

Efficient DNA binding requires dimerization with another bHLH protein. Binds DNA as a homodimer or a heterodimer (USF1/USF2).

The protein localises to the nucleus. Transcription factor that binds to a symmetrical DNA sequence (E-boxes) (5'-CACGTG-3') that is found in a variety of viral and cellular promoters. The polypeptide is Upstream stimulatory factor 1 (Usf1) (Mus musculus (Mouse)).